The following is a 227-amino-acid chain: Cytochrome c oxidase subunit 2 (227 aa).

Residues Met-1–Ser-14 are Mitochondrial intermembrane-facing. The helical transmembrane segment at Pro-15–Met-45 threads the bilayer. Residues Leu-46 to Gln-59 lie on the Mitochondrial matrix side of the membrane. The helical transmembrane segment at Glu-60 to Met-87 threads the bilayer. Residues Asp-88–Val-227 are Mitochondrial intermembrane-facing. Cu cation contacts are provided by His-161, Cys-196, Glu-198, Cys-200, His-204, and Met-207. Glu-198 contacts Mg(2+). Residue Tyr-218 is modified to Phosphotyrosine.

It belongs to the cytochrome c oxidase subunit 2 family. Component of the cytochrome c oxidase (complex IV, CIV), a multisubunit enzyme composed of 14 subunits. The complex is composed of a catalytic core of 3 subunits MT-CO1, MT-CO2 and MT-CO3, encoded in the mitochondrial DNA, and 11 supernumerary subunits COX4I, COX5A, COX5B, COX6A, COX6B, COX6C, COX7A, COX7B, COX7C, COX8 and NDUFA4, which are encoded in the nuclear genome. The complex exists as a monomer or a dimer and forms supercomplexes (SCs) in the inner mitochondrial membrane with NADH-ubiquinone oxidoreductase (complex I, CI) and ubiquinol-cytochrome c oxidoreductase (cytochrome b-c1 complex, complex III, CIII), resulting in different assemblies (supercomplex SCI(1)III(2)IV(1) and megacomplex MCI(2)III(2)IV(2)). Found in a complex with TMEM177, COA6, COX18, COX20, SCO1 and SCO2. Interacts with TMEM177 in a COX20-dependent manner. Interacts with COX20. Interacts with COX16. The cofactor is Cu cation.

It localises to the mitochondrion inner membrane. It carries out the reaction 4 Fe(II)-[cytochrome c] + O2 + 8 H(+)(in) = 4 Fe(III)-[cytochrome c] + 2 H2O + 4 H(+)(out). Functionally, component of the cytochrome c oxidase, the last enzyme in the mitochondrial electron transport chain which drives oxidative phosphorylation. The respiratory chain contains 3 multisubunit complexes succinate dehydrogenase (complex II, CII), ubiquinol-cytochrome c oxidoreductase (cytochrome b-c1 complex, complex III, CIII) and cytochrome c oxidase (complex IV, CIV), that cooperate to transfer electrons derived from NADH and succinate to molecular oxygen, creating an electrochemical gradient over the inner membrane that drives transmembrane transport and the ATP synthase. Cytochrome c oxidase is the component of the respiratory chain that catalyzes the reduction of oxygen to water. Electrons originating from reduced cytochrome c in the intermembrane space (IMS) are transferred via the dinuclear copper A center (CU(A)) of subunit 2 and heme A of subunit 1 to the active site in subunit 1, a binuclear center (BNC) formed by heme A3 and copper B (CU(B)). The BNC reduces molecular oxygen to 2 water molecules using 4 electrons from cytochrome c in the IMS and 4 protons from the mitochondrial matrix. The polypeptide is Cytochrome c oxidase subunit 2 (MT-CO2) (Urocyon cinereoargenteus (Gray fox)).